Consider the following 366-residue polypeptide: Beta sliding clamp (366 aa).

This sequence belongs to the beta sliding clamp family. In terms of assembly, forms a ring-shaped head-to-tail homodimer around DNA which binds and tethers DNA polymerases and other proteins to the DNA. The DNA replisome complex has a single clamp-loading complex (3 tau and 1 each of delta, delta', psi and chi subunits) which binds 3 Pol III cores (1 core on the leading strand and 2 on the lagging strand) each with a beta sliding clamp dimer. Additional proteins in the replisome are other copies of gamma, psi and chi, Ssb, DNA helicase and RNA primase.

The protein localises to the cytoplasm. Its function is as follows. Confers DNA tethering and processivity to DNA polymerases and other proteins. Acts as a clamp, forming a ring around DNA (a reaction catalyzed by the clamp-loading complex) which diffuses in an ATP-independent manner freely and bidirectionally along dsDNA. Initially characterized for its ability to contact the catalytic subunit of DNA polymerase III (Pol III), a complex, multichain enzyme responsible for most of the replicative synthesis in bacteria; Pol III exhibits 3'-5' exonuclease proofreading activity. The beta chain is required for initiation of replication as well as for processivity of DNA replication. In Buchnera aphidicola subsp. Acyrthosiphon pisum (strain APS) (Acyrthosiphon pisum symbiotic bacterium), this protein is Beta sliding clamp (dnaN).